A 504-amino-acid polypeptide reads, in one-letter code: Lysine--tRNA ligase (504 aa).

Mg(2+) is bound by residues Glu-414 and Glu-421.

It belongs to the class-II aminoacyl-tRNA synthetase family. In terms of assembly, homodimer. Mg(2+) serves as cofactor.

Its subcellular location is the cytoplasm. It carries out the reaction tRNA(Lys) + L-lysine + ATP = L-lysyl-tRNA(Lys) + AMP + diphosphate. The chain is Lysine--tRNA ligase from Photorhabdus laumondii subsp. laumondii (strain DSM 15139 / CIP 105565 / TT01) (Photorhabdus luminescens subsp. laumondii).